The chain runs to 127 residues: Large ribosomal subunit protein bL17 (127 aa).

It belongs to the bacterial ribosomal protein bL17 family. As to quaternary structure, part of the 50S ribosomal subunit. Contacts protein L32.

The sequence is that of Large ribosomal subunit protein bL17 from Xanthomonas euvesicatoria pv. vesicatoria (strain 85-10) (Xanthomonas campestris pv. vesicatoria).